Here is a 141-residue protein sequence, read N- to C-terminus: UPF0179 protein Cmaq_1008 (141 aa).

Belongs to the UPF0179 family.

The protein is UPF0179 protein Cmaq_1008 of Caldivirga maquilingensis (strain ATCC 700844 / DSM 13496 / JCM 10307 / IC-167).